We begin with the raw amino-acid sequence, 156 residues long: Small ribosomal subunit protein uS7 (156 aa).

Belongs to the universal ribosomal protein uS7 family. In terms of assembly, part of the 30S ribosomal subunit. Contacts proteins S9 and S11.

In terms of biological role, one of the primary rRNA binding proteins, it binds directly to 16S rRNA where it nucleates assembly of the head domain of the 30S subunit. Is located at the subunit interface close to the decoding center, probably blocks exit of the E-site tRNA. The chain is Small ribosomal subunit protein uS7 from Sodalis glossinidius (strain morsitans).